A 138-amino-acid chain; its full sequence is Endonuclease V (138 aa).

Catalysis depends on T2, which acts as the Nucleophile; via amide nitrogen. E23 (proton acceptor) is an active-site residue.

In terms of assembly, monomer.

The enzyme catalyses Cleaves the N-glycosidic bond between the 5'-pyrimidine residue in cyclobutadipyrimidine (in DNA) and the corresponding deoxy-D-ribose residue.. It carries out the reaction 2'-deoxyribonucleotide-(2'-deoxyribose 5'-phosphate)-2'-deoxyribonucleotide-DNA = a 3'-end 2'-deoxyribonucleotide-(2,3-dehydro-2,3-deoxyribose 5'-phosphate)-DNA + a 5'-end 5'-phospho-2'-deoxyribonucleoside-DNA + H(+). Participates in the repair of UV-damaged DNA by excising pyrimidine dimers that are the major UV-lesions. DNA glycosylase activity hydrolyzes the glycosylic bond of the 5' pyrimidine of the dimer. This leaves apurinic/apyrimidic (AP) sites in the DNA. These AP sites are removed by the AP lyase activity which cleaves the intrapyrimidine phosphodiester bond. Catalysis proceeds via a protonated imine covalent intermediate between the alpha-amino group of the N-terminal threonine residue and the C1' of the deoxyribose sugar of the 5' pyrimidine at the dimer site. In Enterobacteria phage T4 (Bacteriophage T4), this protein is Endonuclease V.